Reading from the N-terminus, the 1028-residue chain is MLLLTLRRAKGRDRGRPAGGPRRALSLPWSPAWICCWALAGCQAVWAGDSSSSGRPLPACQEKDYHFEYTECDSTGSRWRVAIPNSAVDCSGLPDPVKGKECTFSCASGEYLEMKNQVCSKCVEGTYSLGSGIKFDEWDELPAGFSNVATFMDTVVGPSDSRPDGCNNSSWLPRGNYIESNRDDCTVSLIYAVHLKKSGYVFFEYQYVDNNIFFEFFIQNDQCQEMDATTDKWVKLTDNGEWGSHSVMLKSGTNILYWRTTGILMGSKAVKPVLVKNITIEGVAYTSECFPCKPGTFSNKPGSFNCQMCPRNTYSEKGAKECIRCKEDSQFSEEGASECVDRPPCTTKDYFQIHTPCDEEGKTQIMYKWIEPKICREDLTDAIRLPPSGEKKDCPPCNPGFYNNGSSSCHPCPPGTFSDGTKECKSCPAGTEPALGFEYKWWNVLPANMKTSCFNVGNSKCDGMNGWEVAGDHIRSGAGGSDNDYLILNLHIPGFKPPTSMTGATGSELGRITFVFETLCSADCVLYFMVDINRKSTNVVESWGGTKEKQAYTHVIFKNATFTFTWAFQRTNQGQDNRRFINDVVKIYSITATNAVDGVAASCRACALGSEQSASSCVPCPPGHYIEKETNQCKECPADTYLSIHQVYGKEACIPCGPGSKSTQDHSLCYSDCFFYHEKENQTLHYDFRNLSSVGSLMNGPSFTSKGTKYFHFFNISLCGHEGRKMALCTNNISDFTVKEMVTGSDDYTNLVGAFVCQSTIIPSESKGFRAALSSQSIILADMFLGVTVDTALQNVNIKEDMFPVSPSQVPDVHFFYKSSTATTSCINGRSTAVKMRCNPMRPGAGVISVPSKCPAGTCDGCTFYFLWESAEACPLCTEHDFHEIEGACKRGLQEILYVWNEPKWCIKGISLPEKKLSTCETVDFWLKVGAGVGAFTAVLLVALTCYFWKKNQKLEYKYSKLVMTTNSKECELPAADSCAIMEGEDNEEDVVYSNKQSLLGKLKSLATKEKDDHFESVQLKSSRCPNI.

An N-terminal signal peptide occupies residues M1–A47. Residues G48–K928 are Extracellular-facing. An N-linked (GlcNAc...) asparagine glycan is attached at N168. 3 disulfide bridges follow: C292/C309, C322/C345, and C325/C357. Residues N404 and N690 are each glycosylated (N-linked (GlcNAc...) asparagine). Positions S671–L876 constitute an MRH domain. Disulfide bonds link C673–C719, C729–C757, C826–C862, and C838–C874. Residues V929–W949 form a helical membrane-spanning segment. The Cytoplasmic portion of the chain corresponds to K950 to I1028. S1017 carries the post-translational modification Phosphoserine.

It belongs to the ELAPOR family.

Its subcellular location is the cell membrane. Its function is as follows. Functions as a regulator of the BMP signaling pathway and may be involved in epidermal differentiation. This is Endosome/lysosome-associated apoptosis and autophagy regulator family member 2 from Mus musculus (Mouse).